The primary structure comprises 385 residues: Serine/threonine-protein kinase H2 (385 aa).

Residues 63–320 (YDIKALIGTG…AGQALDHPWV (258 aa)) enclose the Protein kinase domain. Residues 69-77 (IGTGSFSRV) and Lys-92 each bind ATP. The tract at residues 342-367 (QRASPHSQSPGSAQSSKSHYSHKSRH) is disordered. Residues 344-359 (ASPHSQSPGSAQSSKS) show a composition bias toward low complexity.

It belongs to the protein kinase superfamily. CAMK Ser/Thr protein kinase family.

The enzyme catalyses L-seryl-[protein] + ATP = O-phospho-L-seryl-[protein] + ADP + H(+). The catalysed reaction is L-threonyl-[protein] + ATP = O-phospho-L-threonyl-[protein] + ADP + H(+). The sequence is that of Serine/threonine-protein kinase H2 (PSKH2) from Homo sapiens (Human).